Here is a 636-residue protein sequence, read N- to C-terminus: Chaperone protein DnaK (636 aa).

Position 198 is a phosphothreonine; by autocatalysis (Thr198). Residues 598-636 (YAAKEQPGEHGETGSGEQARKESGKDENVVDADFEEVKK) are disordered. Over residues 603-625 (QPGEHGETGSGEQARKESGKDEN) the composition is skewed to basic and acidic residues. Acidic residues predominate over residues 626–636 (VVDADFEEVKK).

Belongs to the heat shock protein 70 family.

Its function is as follows. Acts as a chaperone. This chain is Chaperone protein DnaK, found in Pelobacter propionicus (strain DSM 2379 / NBRC 103807 / OttBd1).